The following is a 609-amino-acid chain: MNTEPEAKTNEYLRGIVANLPEKPGVYQYLNTEGTIIYVGKAKNLKKRVYSYFSKEHEPGKTRVLVSKIADIRYIVVNTEEDALLLENNLIKKYKPRYNVLLKDDKTYPSICVQNEYFPRIFRTRKIIKNGSSYYGPYSHLPSMYAVLDLIKHLYPLRTCNLNLSPENIRAGKFKVCLEYHIKKCAGPCVGLQSHEDYLKNIDEIKEILKGNTQDISRMLVEKMQELANEMKFEEAQKIKEKYLLIENYRSKSEVVSSVLHNIDVFSIEEDDSNSAFVNYLHITNGAINQAFTFEYKKKLNESKEELLTLGIIEMRERYKSHSREIIVPFELDLELNNVVFTVPQRGDKKKLLDLSILNVKQYKADRLKQAEKLNPEQRSMRLLKEIQNELHLDKPPLQIECFDNSNIQGSDAVAACVVFKKAKPSKKDYRKYNIKTVVGPDDYASMKEVVRRRYQRAIEENSPLPDLIITDGGKGQMEVVREVIEDELHLNIPIAGLAKDNKHRTSELLFGFPAQTIGIKQQSSLFRLLTQIQDEVHRFAITFHRDKRSKRQVASALDSIKGIGEKTKTALLKEFKSVKRIKEASLEEIAKVIGEVKAQTVKKGLSNE.

In terms of domain architecture, GIY-YIG spans 22 to 100; that stretch reads EKPGVYQYLN…IKKYKPRYNV (79 aa). A UVR domain is found at 214-249; the sequence is QDISRMLVEKMQELANEMKFEEAQKIKEKYLLIENY.

Belongs to the UvrC family. In terms of assembly, interacts with UvrB in an incision complex.

The protein localises to the cytoplasm. In terms of biological role, the UvrABC repair system catalyzes the recognition and processing of DNA lesions. UvrC both incises the 5' and 3' sides of the lesion. The N-terminal half is responsible for the 3' incision and the C-terminal half is responsible for the 5' incision. This Bacteroides thetaiotaomicron (strain ATCC 29148 / DSM 2079 / JCM 5827 / CCUG 10774 / NCTC 10582 / VPI-5482 / E50) protein is UvrABC system protein C.